A 40-amino-acid chain; its full sequence is Neutral phospholipase A2 homolog cannitoxin beta chain 2 (40 aa).

In terms of assembly, heterotrimer of alpha, beta, and gamma chains; non-covalently linked. In terms of tissue distribution, expressed by the venom gland.

It localises to the secreted. Heterotrimer: Snake venom phospholipase A2 (PLA2) heterotrimer that acts as a potent presynaptic neurotoxin by blocking synaptic transmission and synaptic vesicle recycling. Enzymatic activity is essential for the neurotoxic effects. May act by binding in a calcium-dependent fashion to neurotonal pentraxin-1 (NPTX1) and neurotonal pentraxin-2 (NPTX2), but not to neuronal pentraxin receptor (NPTXR). Also binds to taipoxin-associated calcium binding protein 49 (RCN2), a protein localized in the lumen of endoplasmic reticulum. Its function is as follows. Monomer (beta chain): Snake venom phospholipase A2 homolog that is neither toxic nor enzymatically active. Does not bind calcium. This is Neutral phospholipase A2 homolog cannitoxin beta chain 2 from Oxyuranus scutellatus canni (Papuan taipan).